The chain runs to 109 residues: Putative RNase MJ1380 (109 aa).

Catalysis depends on residues arginine 76 and histidine 81. An RX(4)HXY motif motif is present at residues 76-83 (RNILIHKY). Tyrosine 83 is modified (O-di-AMP-tyrosine).

Belongs to the HepT RNase toxin family. In terms of assembly, homodimer, probably forms a complex with cognate antitoxin MJ1379. Post-translationally, modified by cognate antitoxin MJ1379; probably at least 2 successive AMPylation events occur on Tyr-83.

Its function is as follows. Probable toxic component of a putative type VII toxin-antitoxin (TA) system, probably an RNase. Probably neutralized by cognate antitoxin MJ1379. Neutralization may be due to AMPylation by antitoxin MJ1379. This chain is Putative RNase MJ1380, found in Methanocaldococcus jannaschii (strain ATCC 43067 / DSM 2661 / JAL-1 / JCM 10045 / NBRC 100440) (Methanococcus jannaschii).